The chain runs to 171 residues: MTTRQSSFSYEEILICGRGEMFGPGNAQLPLPPMLMFNRITDISETGGPHDKGYVRAEFDITPDLWFFPCHFMGDPVMPGCLGLDAMWQLTGFFLGWLGEAGKGRAISTGEVKFTGMVTPKTKLVEYGIDFKRVMRGRLVLGIADGWMKADGETIYKATDLRVGLFQEKAG.

The active site involves His71.

Belongs to the thioester dehydratase family. FabA subfamily. As to quaternary structure, homodimer.

It is found in the cytoplasm. It carries out the reaction a (3R)-hydroxyacyl-[ACP] = a (2E)-enoyl-[ACP] + H2O. The catalysed reaction is (3R)-hydroxydecanoyl-[ACP] = (2E)-decenoyl-[ACP] + H2O. The enzyme catalyses (2E)-decenoyl-[ACP] = (3Z)-decenoyl-[ACP]. Its pathway is lipid metabolism; fatty acid biosynthesis. Functionally, necessary for the introduction of cis unsaturation into fatty acids. Catalyzes the dehydration of (3R)-3-hydroxydecanoyl-ACP to E-(2)-decenoyl-ACP and then its isomerization to Z-(3)-decenoyl-ACP. Can catalyze the dehydratase reaction for beta-hydroxyacyl-ACPs with saturated chain lengths up to 16:0, being most active on intermediate chain length. This chain is 3-hydroxydecanoyl-[acyl-carrier-protein] dehydratase, found in Sinorhizobium medicae (strain WSM419) (Ensifer medicae).